An 85-amino-acid polypeptide reads, in one-letter code: Protein 19.2 (85 aa).

The sequence is that of Protein 19.2 from Escherichia coli (Bacteriophage T7).